The primary structure comprises 41 residues: Photosystem II reaction center protein L (41 aa).

Residues 20–40 (SLYLGLLLVFVVGILFSSYFF) traverse the membrane as a helical segment.

It belongs to the PsbL family. In terms of assembly, PSII is composed of 1 copy each of membrane proteins PsbA, PsbB, PsbC, PsbD, PsbE, PsbF, PsbH, PsbI, PsbJ, PsbK, PsbL, PsbM, PsbT, PsbX, PsbY, PsbZ, Psb30/Ycf12, peripheral proteins PsbO, CyanoQ (PsbQ), PsbU, PsbV and a large number of cofactors. It forms dimeric complexes.

It is found in the cellular thylakoid membrane. Its function is as follows. One of the components of the core complex of photosystem II (PSII). PSII is a light-driven water:plastoquinone oxidoreductase that uses light energy to abstract electrons from H(2)O, generating O(2) and a proton gradient subsequently used for ATP formation. It consists of a core antenna complex that captures photons, and an electron transfer chain that converts photonic excitation into a charge separation. This subunit is found at the monomer-monomer interface and is required for correct PSII assembly and/or dimerization. This Trichodesmium erythraeum (strain IMS101) protein is Photosystem II reaction center protein L.